The following is a 189-amino-acid chain: MKFGFDIDDTLIDLRQHAFHLYNKKLNKKVGLDVFHSLKTIEIHEAFGMTSEEGSHMWNSLLDEIYYTSCSPFPYAVETLQELEKQGHEIYYITARPKEHGEQTKKWLIEKGFPVHEDRFFYGMKDEEKIHFIQEIKLNYFFDDKPAVLETLIGKPINVYAKTTSYNQHLNIPRITSWTELGDIIKKEM.

The protein belongs to the 5'(3')-deoxyribonucleotidase family.

In Bacillus cereus (strain ATCC 14579 / DSM 31 / CCUG 7414 / JCM 2152 / NBRC 15305 / NCIMB 9373 / NCTC 2599 / NRRL B-3711), this protein is Putative nucleotidase BC_3386.